A 2248-amino-acid polypeptide reads, in one-letter code: Zinc finger protein 407 (2248 aa).

The segment covering 1-32 (MMDSENKPENDEDEKINKEAQDLTKLSSHNED) has biased composition (basic and acidic residues). Residues 1 to 84 (MMDSENKPEN…RRKLDEAEPL (84 aa)) form a disordered region. C2H2-type zinc fingers lie at residues 186-208 (LKCSICGHLFSSCSDLEKHAESH), 215-238 (HTCCHCSHKAESSSALHMHIKQAH), and 244-268 (FSCDLCGFQCSEENLLNAHYLGKTH). 2 disordered regions span residues 291–322 (KKSRTMATKNVHSKPRTSKSIAKNSDSKGLRN) and 494–515 (SETQEAEQGQGSARPPDSGLHS). The segment covering 494–504 (SETQEAEQGQG) has biased composition (polar residues). C2H2-type zinc fingers lie at residues 528-551 (CACTDCGQVATNRTDLEIHVKRCH), 557-581 (FYCRTCDFSSMSRRDLDEHLHSNQH), and 615-639 (FLCTPCNLFFLSEKDVEEHKATEKH). Residues 667 to 700 (ESENAKESMDDSGKASQEEPLKSRVSHGNEVRHS) form a disordered region. Residues 669–699 (ENAKESMDDSGKASQEEPLKSRVSHGNEVRH) show a composition bias toward basic and acidic residues. The segment at 705–728 (FQCKKCFYKTRSSTVLTRHIKLRH) adopts a C2H2-type 7 zinc-finger fold. The interval 821 to 847 (LSQSGGSTKDDELASTTTPKRGRPKGN) is disordered. 2 consecutive C2H2-type zinc fingers follow at residues 850–873 (RTCSHCGLLASSITNLTVHIRRKH) and 879–903 (YLCKVCKYYTVTKGDMERHCATKKH). A disordered region spans residues 910–962 (EASGKHSSDIIVGPEGGSLEAGKKNAGSAVTMSDEHANKPAESPTSVLEKPDR). C2H2-type zinc fingers lie at residues 1017–1040 (NKCLHCEFSAHSSASLELHVKRKH) and 1046–1070 (FYCMACDYYAVTRREMTRHAATEKH). Ser1262 is subject to Phosphoserine. 2 consecutive C2H2-type zinc fingers follow at residues 1444–1468 (FHCLLCGKSFYTESNLHQHLASAGH) and 1486–1509 (FKCVKCTEPFDSEQNLFLHIKGQH). The C2H2-type 14; degenerate zinc finger occupies 1537-1561 (NVCKYCGKMCRSSNSMAFLAHIRTH). 8 consecutive C2H2-type zinc fingers follow at residues 1567 to 1589 (FKCKICHFATAQLGDARNHVKRH), 1595 to 1618 (YKCHVCGVAFVMKKHLNTHLLGKH), 1628 to 1650 (FTCHLCDRSFTEKWALNNHMKLH), 1656 to 1680 (FKCTWPTCHYSFLTASAMKDHYRTH), 1686 to 1708 (FLCDLCGFAGGTRHALTKHRRQH), 1714 to 1736 (FKCDECNFASTTQSHLTRHKRVH), 1742 to 1767 (YRCPWCDYRSNCAENIRKHILHTGKH), and 1773 to 1796 (YNCPKCDYGTNVPVEFRNHLKEQH).

Its subcellular location is the nucleus. Functionally, may be involved in transcriptional regulation. This is Zinc finger protein 407 (ZNF407) from Homo sapiens (Human).